The following is a 67-amino-acid chain: Neurotoxin Os3 (67 aa).

The 65-residue stretch at 3-67 folds into the LCN-type CS-alpha/beta domain; the sequence is RDGYIAQPHN…GVIVDGEKCH (65 aa). 4 disulfides stabilise this stretch: Cys-13–Cys-66, Cys-17–Cys-39, Cys-24–Cys-48, and Cys-28–Cys-50.

The protein belongs to the long (4 C-C) scorpion toxin superfamily. Sodium channel inhibitor family. Alpha subfamily. Expressed by the venom gland.

It is found in the secreted. Binds to sodium channels (Nav) and inhibits the inactivation of the activated channels, thereby blocking neuronal transmission. The protein is Neurotoxin Os3 of Orthochirus scrobiculosus (Central Asian scorpion).